Here is a 654-residue protein sequence, read N- to C-terminus: Biotin-dependent 3-methylcrotonyl-coenzyme A carboxylase alpha1 subunit (654 aa).

In terms of domain architecture, Biotin carboxylation spans 1-448; sequence MFDTVLVANR…DTAVLDERSA (448 aa). The 200-residue stretch at 120–319 folds into the ATP-grasp domain; that stretch reads KNAVAAFDVP…LVEWQLRVGA (200 aa). 148–209 contacts ATP; it reads AAEVGYPVLI…ERFVLRPRHI (62 aa). 3 residues coordinate Mg(2+): Glu-275, Glu-290, and Asn-292. Glu-275, Glu-290, and Asn-292 together coordinate Mn(2+). The Biotinyl-binding domain occupies 578–653; the sequence is HRAVGARPAE…KVEQVLARIK (76 aa). At Lys-620 the chain carries N6-biotinyllysine.

As to quaternary structure, the biotin-dependent acyl-CoA carboxylase complex is composed of AccA1, which contains the biotin carboxylase (BC) and biotin carboxyl carrier protein (BCCP) domains, and AccD1, which contains the carboxyl transferase (CT) domain. The AccA1/AccD1 complex forms a dodecamer. Requires Mg(2+) as cofactor. The cofactor is Mn(2+). Biotin is required as a cofactor.

It carries out the reaction N(6)-biotinyl-L-lysyl-[protein] + hydrogencarbonate + ATP = N(6)-carboxybiotinyl-L-lysyl-[protein] + ADP + phosphate + H(+). It participates in amino-acid degradation; L-leucine degradation. Its function is as follows. Component of a biotin-dependent acyl-CoA carboxylase complex. This subunit catalyzes the ATP-dependent carboxylation of the biotin carried by the biotin carboxyl carrier (BCC) domain, resulting in the formation of carboxyl biotin. When associated with the beta1 subunit AccD1, is involved in branched amino-acid catabolism with methylcrotonyl coenzyme A as the substrate. In Mycobacterium bovis (strain ATCC BAA-935 / AF2122/97), this protein is Biotin-dependent 3-methylcrotonyl-coenzyme A carboxylase alpha1 subunit (accA1).